A 212-amino-acid polypeptide reads, in one-letter code: Ribosomal RNA small subunit methyltransferase G (212 aa).

S-adenosyl-L-methionine contacts are provided by residues Gly76, Met81, 127–128 (VE), and Arg145.

The protein belongs to the methyltransferase superfamily. RNA methyltransferase RsmG family.

The protein resides in the cytoplasm. It catalyses the reaction guanosine(527) in 16S rRNA + S-adenosyl-L-methionine = N(7)-methylguanosine(527) in 16S rRNA + S-adenosyl-L-homocysteine. Its function is as follows. Specifically methylates the N7 position of guanine in position 527 of 16S rRNA. In Acinetobacter baylyi (strain ATCC 33305 / BD413 / ADP1), this protein is Ribosomal RNA small subunit methyltransferase G.